Reading from the N-terminus, the 362-residue chain is Large ribosomal subunit protein uL3 (362 aa).

The tract at residues 340–362 (RPPKKKPPVQRPQITYVSVESKQ) is disordered. The segment covering 351 to 362 (PQITYVSVESKQ) has biased composition (polar residues).

Belongs to the universal ribosomal protein uL3 family. Part of the 50S ribosomal subunit. Forms a cluster with proteins L14 and L24e.

Its function is as follows. One of the primary rRNA binding proteins, it binds directly near the 3'-end of the 23S rRNA, where it nucleates assembly of the 50S subunit. The protein is Large ribosomal subunit protein uL3 of Pyrococcus horikoshii (strain ATCC 700860 / DSM 12428 / JCM 9974 / NBRC 100139 / OT-3).